Reading from the N-terminus, the 470-residue chain is Cysteine--tRNA ligase (470 aa).

Cysteine 28 is a binding site for Zn(2+). The short motif at 30–40 (PTVYNYIHIGN) is the 'HIGH' region element. 3 residues coordinate Zn(2+): cysteine 211, histidine 236, and glutamate 240. The 'KMSKS' region motif lies at 270 to 274 (KMSKS). Lysine 273 lines the ATP pocket.

Belongs to the class-I aminoacyl-tRNA synthetase family. Monomer. Zn(2+) is required as a cofactor.

It localises to the cytoplasm. The enzyme catalyses tRNA(Cys) + L-cysteine + ATP = L-cysteinyl-tRNA(Cys) + AMP + diphosphate. This Enterococcus faecalis (strain ATCC 700802 / V583) protein is Cysteine--tRNA ligase.